The primary structure comprises 157 residues: uncharacterized protein (157 aa).

The next 4 helical transmembrane spans lie at 3–23, 24–44, 47–67, and 105–125; these read IFSF…MFIS, AFLS…ALAV, LMLG…ATAG, and IALL…IAGW.

The protein to E.coli YqaA.

The protein localises to the cell membrane. This is an uncharacterized protein from Haemophilus influenzae (strain ATCC 51907 / DSM 11121 / KW20 / Rd).